The chain runs to 390 residues: Neuromedin-B receptor (390 aa).

The tract at residues 1-20 is disordered; that stretch reads MPPRSLPNLSLPTEASESEL. Over 1 to 41 the chain is Extracellular; sequence MPPRSLPNLSLPTEASESELEPEVWENDFLPDSDGTTAELV. An N-linked (GlcNAc...) asparagine glycan is attached at asparagine 8. Residues 42 to 65 traverse the membrane as a helical segment; it reads IRCVIPSLYLIIISVGLLGNIMLV. Residues 66-79 lie on the Cytoplasmic side of the membrane; that stretch reads KIFLTNSTMRSVPN. The helical transmembrane segment at 80–99 threads the bilayer; that stretch reads IFISNLAAGDLLLLLTCVPV. The Extracellular portion of the chain corresponds to 100-117; it reads DASRYFFDEWVFGKLGCK. An intrachain disulfide couples cysteine 116 to cysteine 198. The chain crosses the membrane as a helical span at residues 118–139; it reads LIPAIQLTSVGVSVFTLTALSA. The Cytoplasmic portion of the chain corresponds to 140–156; the sequence is DRYRAIVNPMDMQTSGV. The helical transmembrane segment at 157-177 threads the bilayer; the sequence is VLWTSLKAVGIWVVSVLLAVP. The Extracellular portion of the chain corresponds to 178-211; that stretch reads EAVFSEVARIGSSDNSSFTACIPYPQTDELHPKI. Asparagine 192 carries an N-linked (GlcNAc...) asparagine glycan. Residues 212–235 traverse the membrane as a helical segment; sequence HSVLIFLVYFLIPLVIISIYYYHI. Residues 236–266 lie on the Cytoplasmic side of the membrane; that stretch reads AKTLIRSAHNLPGEYNEHTKKQMETRKRLAK. Residues 267 to 287 traverse the membrane as a helical segment; that stretch reads IVLVFVGCFVFCWFPNHILYL. The Extracellular segment spans residues 288–299; the sequence is YRSFNYKEIDPS. The helical transmembrane segment at 300–327 threads the bilayer; sequence LGHMIVTLVARVLSFSNSCVNPFALYLL. At 328–390 the chain is on the cytoplasmic side; that stretch reads SESFRKHFNS…GHSTKQEIAL (63 aa). A lipid anchor (S-palmitoyl cysteine) is attached at cysteine 341. Serine 352 carries the post-translational modification Phosphoserine.

The protein belongs to the G-protein coupled receptor 1 family. As to expression, brain (olfactory bulb and central thalamic regions), and esophagus.

Its subcellular location is the cell membrane. In terms of biological role, receptor for neuromedin-B. Contributes to the maintenance of basal sigh rate through signaling in the pre-Botzinger complex, a cluster of several thousand neurons in the ventrolateral medulla responsible for inspiration during respiratory activity. Contributes to the induction of sneezing following exposure to chemical irritants or allergens which causes release of NMB by nasal sensory neurons and activation of NMBR-expressing neurons in the sneeze-evoking region of the brainstem. These in turn activate neurons of the caudal ventral respiratory group, giving rise to the sneezing response. Contributes to induction of acute itch, possibly through its activation on dorsal root ganglion neurons by the NMB peptide. Plays a role in the innate immune response to influenza A virus infection by enhancing interferon alpha expression and reducing expression of IL6. Plays a role in CSF1-induced proliferation of osteoclast precursors by contributing to the positive regulation of the expression of the CSF1 receptor CSF1R. The sequence is that of Neuromedin-B receptor (Nmbr) from Rattus norvegicus (Rat).